The sequence spans 38 residues: Photosystem II reaction center protein L (38 aa).

The helical transmembrane segment at 17 to 37 threads the bilayer; that stretch reads SLYWGLLLIFVLAVPFSNYFF.

This sequence belongs to the PsbL family. PSII is composed of 1 copy each of membrane proteins PsbA, PsbB, PsbC, PsbD, PsbE, PsbF, PsbH, PsbI, PsbJ, PsbK, PsbL, PsbM, PsbT, PsbX, PsbY, PsbZ, Psb30/Ycf12, at least 3 peripheral proteins of the oxygen-evolving complex and a large number of cofactors. It forms dimeric complexes.

The protein localises to the plastid. Its subcellular location is the chloroplast thylakoid membrane. One of the components of the core complex of photosystem II (PSII). PSII is a light-driven water:plastoquinone oxidoreductase that uses light energy to abstract electrons from H(2)O, generating O(2) and a proton gradient subsequently used for ATP formation. It consists of a core antenna complex that captures photons, and an electron transfer chain that converts photonic excitation into a charge separation. This subunit is found at the monomer-monomer interface and is required for correct PSII assembly and/or dimerization. The sequence is that of Photosystem II reaction center protein L from Pinus thunbergii (Japanese black pine).